We begin with the raw amino-acid sequence, 340 residues long: AAGSVPATNQLVDYVVNVGVGSPATTYSLLVDTGSSNTWLGADKSYVKTSTSSATSDKVSVTYGSGSFSGTEYTDTVTLGSLTIPKQSIGVASRDSGFDGVDGILGVGPVDLTVGTLSPHTSTSIPTVTDNLFSQGTIPTNLLAVSFEPTTSESSTNGELTFGATDSSKYTGSITYTPITSTSPASAYWGINQTIRYGSSTSILSSTAGIVDTGTTLTLIASDAFAKYKKATGAVADNNTGLLRLTTAQYANLQSLFFTIGGQTFELTANAQIWPRNLNTAIGGSASSVYLIVGDLGSDSGEGLDFINGLTFLERFYSVYDTTNKRLGLATTSFTTATSN.

The 317-residue stretch at 14–330 folds into the Peptidase A1 domain; that stretch reads YVVNVGVGSP…DTTNKRLGLA (317 aa). Asp32 is a catalytic residue. Asn192 is a glycosylation site (N-linked (GlcNAc...) asparagine). Residue Asp212 is part of the active site. A glycan (N-linked (GlcNAc...) asparagine) is linked at Asn238.

This sequence belongs to the peptidase A1 family.

The enzyme catalyses Milk clotting activity, broad specificity, but fails to cleave 15-Leu-|-Tyr-16 or 16-Tyr-|-Leu-17 of insulin B chain.. The protein is Polyporopepsin of Irpex lacteus (Milk-white toothed polypore).